Here is an 823-residue protein sequence, read N- to C-terminus: Protein Jade-3 (823 aa).

Positions 1 to 40 (MKRHRPVSSSESSDECPSTSFTSSSMYRKKSKNPKEQKKS) are disordered. A compositionally biased stretch (low complexity) spans 8-20 (SSSESSDECPSTS). An N6-acetyllysine mark is found at Lys30, Lys32, and Lys35. A PHD-type 1 zinc finger spans residues 200 to 250 (DVICDVCRSPDSEEGNDMVFCDKCNVCVHQACYGILKIPEGSWLCRSCVLG). The C2HC pre-PHD-type zinc finger occupies 252–286 (YPQCVLCPKKGGAMKTTRTGTKWAHVSCALWIPEV). The PHD-type 2 zinc finger occupies 310–366 (LVCNLCKLKTGACIQCSVKSCITAFHVTCAFEHGLEMKTILDEGDEVKFKSFCLKHS). 2 disordered regions span residues 543-585 (LKMP…PEEP) and 601-631 (KSNC…AEFY). Positions 549 to 562 (TSEDCKDSSTETEH) are enriched in basic and acidic residues. Ser566 and Ser578 each carry phosphoserine. Lys601 is modified (N6-acetyllysine). Ser608 is modified (phosphoserine). Lys638 is subject to N6-acetyllysine. Residues 651-676 (SIGNGKNQPNSRVSSSNGLEGNWSGN) are disordered. Lys735 is modified (N6-acetyllysine). Positions 756 to 823 (TGRASYQETD…HPHSHSSMQR (68 aa)) are disordered. A phosphoserine mark is found at Ser774 and Ser776. The span at 781–809 (EGSKETPRVKRESSDRENPSHDSARECHG) shows a compositional bias: basic and acidic residues.

Belongs to the JADE family. Component of the HBO1 complex composed at least of ING4 or ING5, MYST2/HBO1, MEAF6, and one of JADE1, JADE2 and JADE3.

Its function is as follows. Scaffold subunit of some HBO1 complexes, which have a histone H4 acetyltransferase activity. The protein is Protein Jade-3 (Jade3) of Mus musculus (Mouse).